The chain runs to 232 residues: Ornithine carbamoyltransferase (232 aa).

Residues glutamine 15, arginine 39, and 66-69 contribute to the carbamoyl phosphate site; that span reads HPTQ. Residues asparagine 99, aspartate 163, and 167-168 each bind L-ornithine; that span reads SM. Carbamoyl phosphate is bound by residues 204–207 and threonine 232; that span reads HCLP.

Belongs to the aspartate/ornithine carbamoyltransferase superfamily. OTCase family.

The protein resides in the cytoplasm. It catalyses the reaction carbamoyl phosphate + L-ornithine = L-citrulline + phosphate + H(+). It participates in amino-acid biosynthesis; L-arginine biosynthesis; L-arginine from L-ornithine and carbamoyl phosphate: step 1/3. Reversibly catalyzes the transfer of the carbamoyl group from carbamoyl phosphate (CP) to the N(epsilon) atom of ornithine (ORN) to produce L-citrulline. The polypeptide is Ornithine carbamoyltransferase (argF) (Neisseria subflava).